The chain runs to 278 residues: Large ribosomal subunit protein uL2 (278 aa).

Residues 201-278 (HGNINDGKAG…IMRSRHQKKK (78 aa)) form a disordered region. The span at 210 to 221 (GRSRWRGKRPHV) shows a compositional bias: basic residues.

Belongs to the universal ribosomal protein uL2 family. As to quaternary structure, part of the 50S ribosomal subunit. Forms a bridge to the 30S subunit in the 70S ribosome.

Functionally, one of the primary rRNA binding proteins. Required for association of the 30S and 50S subunits to form the 70S ribosome, for tRNA binding and peptide bond formation. It has been suggested to have peptidyltransferase activity; this is somewhat controversial. Makes several contacts with the 16S rRNA in the 70S ribosome. In Allorhizobium ampelinum (strain ATCC BAA-846 / DSM 112012 / S4) (Agrobacterium vitis (strain S4)), this protein is Large ribosomal subunit protein uL2.